The primary structure comprises 88 residues: Small ribosomal subunit protein uS17 (88 aa).

The protein belongs to the universal ribosomal protein uS17 family. In terms of assembly, part of the 30S ribosomal subunit.

Its function is as follows. One of the primary rRNA binding proteins, it binds specifically to the 5'-end of 16S ribosomal RNA. In Lactobacillus acidophilus (strain ATCC 700396 / NCK56 / N2 / NCFM), this protein is Small ribosomal subunit protein uS17.